Reading from the N-terminus, the 159-residue chain is Ribosomal RNA large subunit methyltransferase H (159 aa).

S-adenosyl-L-methionine is bound by residues leucine 76, glycine 108, and 127 to 132; that span reads FSKMTF.

Belongs to the RNA methyltransferase RlmH family. In terms of assembly, homodimer.

The protein localises to the cytoplasm. It catalyses the reaction pseudouridine(1915) in 23S rRNA + S-adenosyl-L-methionine = N(3)-methylpseudouridine(1915) in 23S rRNA + S-adenosyl-L-homocysteine + H(+). Its function is as follows. Specifically methylates the pseudouridine at position 1915 (m3Psi1915) in 23S rRNA. This is Ribosomal RNA large subunit methyltransferase H from Bifidobacterium animalis subsp. lactis (strain AD011).